A 69-amino-acid polypeptide reads, in one-letter code: UPF0337 protein RB0906 (69 aa).

It belongs to the UPF0337 (CsbD) family.

This chain is UPF0337 protein RB0906, found in Rhizobium meliloti (strain 1021) (Ensifer meliloti).